The primary structure comprises 218 residues: Octanoyltransferase (218 aa).

The BPL/LPL catalytic domain maps to 31-207 (AQTPDELWLL…QLAAQLGYAE (177 aa)). Substrate-binding positions include 70–77 (RGGQVTYH), 137–139 (SLG), and 150–152 (GLA). Catalysis depends on C168, which acts as the Acyl-thioester intermediate.

This sequence belongs to the LipB family.

It localises to the cytoplasm. It catalyses the reaction octanoyl-[ACP] + L-lysyl-[protein] = N(6)-octanoyl-L-lysyl-[protein] + holo-[ACP] + H(+). Its pathway is protein modification; protein lipoylation via endogenous pathway; protein N(6)-(lipoyl)lysine from octanoyl-[acyl-carrier-protein]: step 1/2. Functionally, catalyzes the transfer of endogenously produced octanoic acid from octanoyl-acyl-carrier-protein onto the lipoyl domains of lipoate-dependent enzymes. Lipoyl-ACP can also act as a substrate although octanoyl-ACP is likely to be the physiological substrate. This is Octanoyltransferase from Azotobacter vinelandii (strain DJ / ATCC BAA-1303).